The following is a 119-amino-acid chain: C-C motif chemokine 24 (119 aa).

Positions 1 to 26 (MAGLATFVVSLLLVTLCAHCIDPAGS) are cleaved as a signal peptide. Intrachain disulfides connect Cys33/Cys58 and Cys34/Cys74. N-linked (GlcNAc...) asparagine glycosylation is found at Asn54 and Asn115.

It belongs to the intercrine beta (chemokine CC) family.

It is found in the secreted. Its function is as follows. Chemotactic for resting T-lymphocytes, and eosinophils. Has lower chemotactic activity for neutrophils but none for monocytes and activated lymphocytes. Is a strong suppressor of colony formation by a multipotential hematopoietic progenitor cell line. Binds to CCR3. The protein is C-C motif chemokine 24 of Canis lupus familiaris (Dog).